The primary structure comprises 237 residues: MSIHISAKKGDIADKILLPGDPLRAKFIAENFLEDAVCFNEVRNMFGYTGTYKGHRVSVMGTGMGMPSISIYARELIVDYGVKTLIRVGTAGAIDPEVHVRELVLAQAAATNSNIIRNDFPEFDFPQIADFGLLDKAYHIAREMGVTTHVGNVLSSDVFYTNMPERNMALGKLGVKAIEMEAAALYYLAAQHHVKALGIMTISDNLNDPTEDTTAEERQTTFTDMMKVGLETLIAND.

His4 contributes to the a purine D-ribonucleoside binding site. Residues Gly20, Arg24, Arg43, and 87 to 90 (RVGT) contribute to the phosphate site. Residues 179 to 181 (EME) and 203 to 204 (SD) contribute to the a purine D-ribonucleoside site. Asp204 (proton donor) is an active-site residue.

The protein belongs to the PNP/UDP phosphorylase family. As to quaternary structure, homohexamer; trimer of homodimers.

It carries out the reaction a purine D-ribonucleoside + phosphate = a purine nucleobase + alpha-D-ribose 1-phosphate. The enzyme catalyses a purine 2'-deoxy-D-ribonucleoside + phosphate = a purine nucleobase + 2-deoxy-alpha-D-ribose 1-phosphate. Its function is as follows. Catalyzes the reversible phosphorolytic breakdown of the N-glycosidic bond in the beta-(deoxy)ribonucleoside molecules, with the formation of the corresponding free purine bases and pentose-1-phosphate. The protein is Purine nucleoside phosphorylase DeoD-type of Streptococcus pyogenes serotype M12 (strain MGAS2096).